Here is a 271-residue protein sequence, read N- to C-terminus: Putative hydro-lyase jk0403 (271 aa).

It belongs to the D-glutamate cyclase family.

The protein is Putative hydro-lyase jk0403 of Corynebacterium jeikeium (strain K411).